A 319-amino-acid polypeptide reads, in one-letter code: N-acyl-aromatic-L-amino acid amidohydrolase (carboxylate-forming) (319 aa).

The interval 1 to 210 (MCSLPGSRKP…SILDFIELFN (210 aa)) is hydrolytic domain. Residues His-21 and Glu-24 each coordinate Zn(2+). Substrate contacts are provided by residues Arg-63 and 70-71 (NR). His-116 is a binding site for Zn(2+). Substrate contacts are provided by Glu-178 and Tyr-288. Residues 211–318 (QGMEFPAFEM…PGLTPSSTQT (108 aa)) are shielding domain. Thr-318 bears the Phosphothreonine mark.

This sequence belongs to the AspA/AstE family. Aspartoacylase subfamily. Exists as a mixture of homodimers and homotetramer, both catalytically active. It depends on Zn(2+) as a cofactor.

It is found in the apical cell membrane. The protein localises to the cytoplasm. It catalyses the reaction an N-acyl-aromatic L-alpha-amino acid + H2O = an aromatic L-alpha-amino acid + a carboxylate. It carries out the reaction an N-acetyl-L-cysteine-S-conjugate + H2O = an S-substituted L-cysteine + acetate. In terms of biological role, plays an important role in deacetylating mercapturic acids in kidney proximal tubules. Also acts on N-acetyl-aromatic amino acids. The protein is N-acyl-aromatic-L-amino acid amidohydrolase (carboxylate-forming) (Acy3) of Rattus norvegicus (Rat).